We begin with the raw amino-acid sequence, 1265 residues long: MSTTVNVDSLAEYEKSQIKRALELGTVMTVFSFRKSTPERRTVQVIMETRQVAWSKTADKIEGFLDIMEIKEIRPGKNSKDFERAKAVRQKEDCCFTILYGTQFVLSTLSLAADSKEDAVNWLSGLKILHQEAMNASTPTIIESWLRKQIYSVDQTRRNSISLRELKTILPLINFKVSSAKFLKDKFVEIGAHKDELSFEQFHLFYKKLMFEQQKSILDEFKKDSSVFILGNTDRPDASAVYLHDFQRFLIHEQQEHWAQDLNKVRERMTKFIDDTMRETAEPFLFVDEFLTYLFSRENSIWDEKYDAVDMQDMNNPLSHYWISSSHNTYLTGDQLRSESSPEAYIRCLRMGCRCIELDCWDGPDGKPVIYHGWTRTTKIKFDDVVQAIKDHAFVTSSFPVILSIEEHCSVEQQRHMAKAFKEVFGDLLLTKPTEASADQLPSPSQLREKIIIKHKKLGPRGDVDVNMEDKKDEHKQQGELYMWDSIDQKWTRHYCAIADAKLSFSDDIEQTMEEEVPQDIPPTELHFGEKWFHKKVEKRTSAEKLLQEYCMETGGKDGTFLVRESETFPNDYTLSFWRSGRVQHCRIRSTMEGGTLKYYLTDNLTFSSIYALIQHYRETHLRCAEFELRLTDPVPNPNPHESKPWYYDSLSRGEAEDMLMRIPRDGAFLIRKREGSDSYAITFRARGKVKHCRINRDGRHFVLGTSAYFESLVELVSYYEKHSLYRKMRLRYPVTPELLERYNMERDINSLYDVSRMYVDPSEINPSMPQRTVKALYDYKAKRSDELSFCRGALIHNVSKEPGGWWKGDYGTRIQQYFPSNYVEDISTADFEELEKQIIEDNPLGSLCRGILDLNTYNVVKAPQGKNQKSFVFILEPKQQGDPPVEFATDRVEELFEWFQSIREITWKIDTKENNMKYWEKNQSIAIELSDLVVYCKPTSKTKDNLENPDFREIRSFVETKADSIIRQKPVDLLKYNQKGLTRVYPKGQRVDSSNYDPFRLWLCGSQMVALNFQTADKYMQMNHALFSLNGRTGYVLQPESMRTEKYDPMPPESQRKILMTLTVKVLGARHLPKLGRSIACPFVEVEICGAEYDNNKFKTTVVNDNGLSPIWAPTQEKVTFEIYDPNLAFLRFVVYEEDMFSDPNFLAHATYPIKAVKSGFRSVPLKNGYSEDIELASLLVFCEMRPVLESEEELYSSCRQLRRRQEELNNQLFLYDTHQNLRNANRDALVKEFSVNENQLQLYQEKCNKRLREKRVSNSKFYS.

In terms of domain architecture, PH spans 20-131; that stretch reads RALELGTVMT…WLSGLKILHQ (112 aa). The 145-residue stretch at 312–456 folds into the PI-PLC X-box domain; the sequence is QDMNNPLSHY…LREKIIIKHK (145 aa). Residues His327 and His372 contribute to the active site. SH2 domains follow at residues 532-635 and 646-735; these read WFHK…TDPV and WYYD…RYPV. Residues Tyr753 and Tyr759 each carry the phosphotyrosine; by BTK modification. Residues 769-829 enclose the SH3 domain; sequence MPQRTVKALY…PSNYVEDIST (61 aa). Positions 930 to 1044 constitute a PI-PLC Y-box domain; that stretch reads LSDLVVYCKP…GYVLQPESMR (115 aa). In terms of domain architecture, C2 spans 1038 to 1169; the sequence is LQPESMRTEK…SGFRSVPLKN (132 aa). Tyr1197 is subject to Phosphotyrosine; by BTK. Phosphotyrosine is present on residues Tyr1217 and Tyr1245.

Part of a complex composed of EEIG1, TNFRSF11A/RANK, PLCG2, GAB2, TEC and BTK; complex formation increases in the presence of TNFSF11/RANKL. Interacts (via SH2 domain) with CSF1R (tyrosine phosphorylated). Interacts constitutively with THEMIS2. Ca(2+) serves as cofactor. Phosphorylated on tyrosine residues by CSF1R. Phosphorylated on tyrosine residues by BTK and SYK; upon ligand-induced activation of a variety of growth factor receptors and immune system receptors. Phosphorylation leads to increased phospholipase activity.

Its subcellular location is the membrane raft. The catalysed reaction is a 1,2-diacyl-sn-glycero-3-phospho-(1D-myo-inositol-4,5-bisphosphate) + H2O = 1D-myo-inositol 1,4,5-trisphosphate + a 1,2-diacyl-sn-glycerol + H(+). The production of the second messenger molecules diacylglycerol (DAG) and inositol 1,4,5-trisphosphate (IP3) is mediated by activated phosphatidylinositol-specific phospholipase C enzymes. It is a crucial enzyme in transmembrane signaling. The polypeptide is 1-phosphatidylinositol 4,5-bisphosphate phosphodiesterase gamma-2 (Homo sapiens (Human)).